The chain runs to 457 residues: Siroheme synthase (457 aa).

The tract at residues 1–204 (MDHLPIFCQL…NDQKAITETT (204 aa)) is precorrin-2 dehydrogenase /sirohydrochlorin ferrochelatase. Residues 22–23 (DV) and 43–44 (LA) each bind NAD(+). Ser-128 carries the phosphoserine modification. The uroporphyrinogen-III C-methyltransferase stretch occupies residues 216-457 (GEVVLVGAGP…RDKLNWFSNH (242 aa)). Pro-225 serves as a coordination point for S-adenosyl-L-methionine. The active-site Proton acceptor is Asp-248. Lys-270 serves as the catalytic Proton donor. S-adenosyl-L-methionine is bound by residues 301–303 (GGD), Ile-306, 331–332 (TA), Met-382, and Gly-411.

This sequence in the N-terminal section; belongs to the precorrin-2 dehydrogenase / sirohydrochlorin ferrochelatase family. In the C-terminal section; belongs to the precorrin methyltransferase family.

The catalysed reaction is uroporphyrinogen III + 2 S-adenosyl-L-methionine = precorrin-2 + 2 S-adenosyl-L-homocysteine + H(+). It catalyses the reaction precorrin-2 + NAD(+) = sirohydrochlorin + NADH + 2 H(+). It carries out the reaction siroheme + 2 H(+) = sirohydrochlorin + Fe(2+). The protein operates within cofactor biosynthesis; adenosylcobalamin biosynthesis; precorrin-2 from uroporphyrinogen III: step 1/1. Its pathway is cofactor biosynthesis; adenosylcobalamin biosynthesis; sirohydrochlorin from precorrin-2: step 1/1. It participates in porphyrin-containing compound metabolism; siroheme biosynthesis; precorrin-2 from uroporphyrinogen III: step 1/1. It functions in the pathway porphyrin-containing compound metabolism; siroheme biosynthesis; siroheme from sirohydrochlorin: step 1/1. The protein operates within porphyrin-containing compound metabolism; siroheme biosynthesis; sirohydrochlorin from precorrin-2: step 1/1. Functionally, multifunctional enzyme that catalyzes the SAM-dependent methylations of uroporphyrinogen III at position C-2 and C-7 to form precorrin-2 via precorrin-1. Then it catalyzes the NAD-dependent ring dehydrogenation of precorrin-2 to yield sirohydrochlorin. Finally, it catalyzes the ferrochelation of sirohydrochlorin to yield siroheme. The sequence is that of Siroheme synthase from Escherichia coli O6:K15:H31 (strain 536 / UPEC).